The sequence spans 62 residues: Large ribosomal subunit protein bL28 (62 aa).

This sequence belongs to the bacterial ribosomal protein bL28 family.

The chain is Large ribosomal subunit protein bL28 from Streptococcus gordonii (strain Challis / ATCC 35105 / BCRC 15272 / CH1 / DL1 / V288).